A 417-amino-acid chain; its full sequence is MSLSNKLTLDKLDVKGKRVVMRVDFNVPMKNNQITNNQRIKAAVPSIKFCLDNGAKSVVLMSHLGRPDGVPMPDKYSLEPVAAELKSLLGKDVLFLKDCVGSEVENACANPAAGTVILLENLRFHVEEEGKGKDASGNKVKAEPAKIDAFRASLSKLGDVYVNDAFGTAHRAHSSMVGVNLPQKAGGFLMKKELNYFAKALESPERPFLAILGGAKVADKIQLINNMLDKVNEMIIGGGMAFTFLKVLNNMEIGTSLYDEEGAKIVKDLMAKAEKNGVKITLPVDFVTADKFDENAKTGQATVASGIPAGWMGLDCGTESSKKYAEAVARAKQIVWNGPVGVFEWEAFARGTKSLMDEVVKATSRGCITIIGGGDTATCCAKWNTEDKVSHVSTGGGASLELLEGKVLPGVDALSNV.

Serine 2 is subject to N-acetylserine. Phosphoserine is present on residues serine 2 and serine 4. At lysine 6 the chain carries N6-succinyllysine. Lysine 11 bears the N6-acetyllysine mark. Positions 23, 24, 25, 26, 38, and 39 each coordinate (2R)-3-phosphoglycerate. The interval 38-43 (QRIKAA) is mitochondrial targeting region exposed following cis-trans isomerization by PIN1 and recognized by the TOM complex for mitochondrial translocation of the protein. N6-acetyllysine; alternate is present on lysine 48. The residue at position 48 (lysine 48) is an N6-succinyllysine; alternate. 4 residues coordinate (2R)-3-phosphoglycerate: serine 62, histidine 63, glycine 65, and arginine 66. Lysine 75 is subject to N6-acetyllysine. Tyrosine 76 is modified (phosphotyrosine). 2 positions are modified to N6-acetyllysine: lysine 86 and lysine 91. N6-acetyllysine; alternate is present on lysine 97. Lysine 97 bears the N6-(2-hydroxyisobutyryl)lysine; alternate mark. Residues leucine 122 and arginine 123 each coordinate (2R)-3-phosphoglycerate. At lysine 131 the chain carries N6-acetyllysine; alternate. Lysine 131 is subject to N6-malonyllysine; alternate. Residue lysine 146 is modified to N6-acetyllysine. Positions 170 and 171 each coordinate (2R)-3-phosphoglycerate. An N6-succinyllysine modification is found at lysine 191. Tyrosine 196 is subject to Phosphotyrosine. Lysine 199 carries the N6-acetyllysine modification. Serine 203 carries the post-translational modification Phosphoserine. ADP is bound at residue glycine 214. Position 214 (glycine 214) interacts with CDP. The AMP site is built by alanine 215 and lysine 216. An ATP-binding site is contributed by alanine 215. Residue alanine 215 participates in Mg(2+) binding. N6-(2-hydroxyisobutyryl)lysine is present on lysine 216. Residues alanine 218 and aspartate 219 each contribute to the Mg(2+) site. Aspartate 219 serves as a coordination point for CDP. Lysine 220 is an AMP binding site. ATP is bound at residue lysine 220. An N6-(2-hydroxyisobutyryl)lysine modification is found at lysine 220. Position 238 (glycine 238) interacts with ADP. Glycine 238 contacts CDP. Glycine 239 is a binding site for AMP. Residue glycine 239 coordinates ATP. N6-acetyllysine occurs at positions 267 and 291. Residue glycine 313 coordinates AMP. Glycine 313 lines the ATP pocket. Residue lysine 323 is modified to N6-(2-hydroxyisobutyryl)lysine. Positions 338, 340, and 343 each coordinate CDP. Residue phenylalanine 343 coordinates ADP. AMP is bound at residue glutamate 344. Glutamate 344 contacts ATP. At serine 354 the chain carries Phosphoserine. Lysine 361 bears the N6-acetyllysine mark. The ATP site is built by aspartate 375 and threonine 376. Residue aspartate 375 participates in Mg(2+) binding.

It belongs to the phosphoglycerate kinase family. Monomer. Interacts with kinase MAPK1/ERK2; the interaction is direct, occurs under hypoxic conditions, and promotes its interaction with PIN1. Interacts with peptidyl-prolyl cis-trans isomerase PIN1; the interaction is direct, occurs under hypoxic conditions, and targets the protein to the mitochondrion by promoting interactions with the TOM complex. Interacts with mitochondrial circRNA mcPGK1 (via its 2nd stem-loop); the interaction is direct and targets the protein to the mitochondrion by promoting interactions with the TOM complex. Interacts with pyruvate dehydrogenase kinase PDK1; the interaction is direct, occurs under hypoxic conditions and leads to PDK1-mediated inhibition of pyruvate dehydrogenase complex activity. It depends on Mg(2+) as a cofactor. In terms of processing, phosphorylated at Ser-203 by MAPK1/ERK2 under hypoxic conditions, which promotes its mitochondrial targeting.

It is found in the cytoplasm. The protein localises to the cytosol. The protein resides in the mitochondrion matrix. The enzyme catalyses (2R)-3-phosphoglycerate + ATP = (2R)-3-phospho-glyceroyl phosphate + ADP. It carries out the reaction L-seryl-[protein] + ATP = O-phospho-L-seryl-[protein] + ADP + H(+). The protein operates within carbohydrate degradation; glycolysis; pyruvate from D-glyceraldehyde 3-phosphate: step 2/5. In terms of biological role, catalyzes one of the two ATP producing reactions in the glycolytic pathway via the reversible conversion of 1,3-diphosphoglycerate to 3-phosphoglycerate. Both L- and D- forms of purine and pyrimidine nucleotides can be used as substrates, but the activity is much lower on pyrimidines. In addition to its role as a glycolytic enzyme, it seems that PGK-1 acts as a polymerase alpha cofactor protein (primer recognition protein). Acts as a protein kinase when localized to the mitochondrion where it phosphorylates pyruvate dehydrogenase kinase PDK1 to inhibit pyruvate dehydrogenase complex activity and suppress the formation of acetyl-coenzyme A from pyruvate, and consequently inhibit oxidative phosphorylation and promote glycolysis. May play a role in sperm motility. This chain is Phosphoglycerate kinase 1 (Pgk1), found in Rattus norvegicus (Rat).